A 215-amino-acid polypeptide reads, in one-letter code: Nascent polypeptide-associated complex subunit alpha (215 aa).

Residues 1–81 (MPGEATETVP…SEKKARKAMS (81 aa)) are disordered. Positions 9 to 28 (VPATEQELPQPQAETGSGTE) are enriched in polar residues. Residues 29 to 42 (SDSDESVPELEEQD) show a composition bias toward acidic residues. Ser-43 is subject to Phosphoserine; by ILK1. Positions 44-57 (TQATTQQAQLAAAA) are enriched in low complexity. The interval 69–80 (QSRSEKKARKAM) is required for DNA-binding. The 66-residue stretch at 70 to 135 (SRSEKKARKA…AKIEDLSQQA (66 aa)) folds into the NAC-A/B domain. Residues 93–108 (RVTIRKSKNILFVITK) form an RNA/DNA-binding region. Ser-132 is modified (phosphoserine). Position 142 is an N6-acetyllysine; alternate (Lys-142). A Glycyl lysine isopeptide (Lys-Gly) (interchain with G-Cter in SUMO2); alternate cross-link involves residue Lys-142. A Phosphothreonine; by GSK3-beta modification is found at Thr-159. Thr-161 carries the post-translational modification Phosphothreonine. A phosphoserine mark is found at Ser-166, Ser-186, Ser-191, and Ser-203. The 38-residue stretch at 176–213 (VEVKDIELVMSQANVSRAKAVRALKNNSNDIVNAIMEL) folds into the UBA domain.

The protein belongs to the NAC-alpha family. In terms of assembly, interacts with TBP and JUN. Part of the nascent polypeptide-associated complex (NAC), which is a heterodimer of NACA and BTF3 (via NAC-A/B domains). NAC associates with ribosomes through the BTF3/NACB subunit and contacts the ribosomal protein L23, which is positioned near the exiting site. Both subunits can contact nascent polypeptide chains. NACA may also form homodimers, and only this form binds DNA. Post-translationally, phosphorylation of Thr-159 by GSK3B may promote proteasome mediated degradation. Phosphorylation of Ser-43 by ILK during cell adhesion may promote nuclear localization. As to expression, ubiquitously expressed.

Its subcellular location is the cytoplasm. It is found in the nucleus. Functionally, prevents inappropriate targeting of non-secretory polypeptides to the endoplasmic reticulum (ER). Binds to nascent polypeptide chains as they emerge from the ribosome and blocks their interaction with the signal recognition particle (SRP), which normally targets nascent secretory peptides to the ER. Also reduces the inherent affinity of ribosomes for protein translocation sites in the ER membrane (M sites). May act as a specific coactivator for JUN, binding to DNA and stabilizing the interaction of JUN homodimers with target gene promoters. The polypeptide is Nascent polypeptide-associated complex subunit alpha (NACA) (Homo sapiens (Human)).